Here is a 77-residue protein sequence, read N- to C-terminus: Putative antitoxin VapB3 (77 aa).

The stretch at 10–60 (RRGLKKELEELGINYAEAVRKFLEELVARERRRRALERARALREELRKKGA) forms a coiled coil.

Forms a complex with putative toxin VapC3, possibly VapB(2)-VapC(2).

Functionally, antitoxin component of a type II toxin-antitoxin (TA) system. This is Putative antitoxin VapB3 (vAPb3) from Pyrobaculum aerophilum (strain ATCC 51768 / DSM 7523 / JCM 9630 / CIP 104966 / NBRC 100827 / IM2).